A 393-amino-acid chain; its full sequence is STE20-related kinase adapter protein alpha (393 aa).

Residues Ser-2 and Ser-9 each carry the phosphoserine modification. In terms of domain architecture, Protein kinase spans 32-341 (YELLSVIGKG…ASTLLNHSFF (310 aa)). Thr-381 carries the phosphothreonine; by LKB1 modification.

This sequence belongs to the protein kinase superfamily. STE Ser/Thr protein kinase family. STE20 subfamily. In terms of assembly, component of a trimeric complex composed of STK11/LKB1, STRAD (STRADA or STRADB) and CAB39/MO25 (CAB39/MO25alpha or CAB39L/MO25beta): the complex tethers STK11/LKB1 in the cytoplasm and stimulates its catalytic activity. As to expression, expressed in liver.

The protein localises to the nucleus. It localises to the cytoplasm. Pseudokinase which, in complex with CAB39/MO25 (CAB39/MO25alpha or CAB39L/MO25beta), binds to and activates STK11/LKB1. Adopts a closed conformation typical of active protein kinases and binds STK11/LKB1 as a pseudosubstrate, promoting conformational change of STK11/LKB1 in an active conformation. The sequence is that of STE20-related kinase adapter protein alpha (Strada) from Rattus norvegicus (Rat).